The primary structure comprises 430 residues: Dihydrofolate synthase/folylpolyglutamate synthase (430 aa).

51–54 (GKGS) is an ATP binding site. S75 provides a ligand contact to Mg(2+). 114–117 (TEYG) lines the 7,8-dihydropteroate pocket. Mg(2+) is bound at residue E145. 152–154 (FDS) contributes to the 7,8-dihydropteroate binding site. Residue H172 coordinates Mg(2+). Residues Q263, R302, and D315 each coordinate ATP.

The protein belongs to the folylpolyglutamate synthase family. Monomer. Mg(2+) is required as a cofactor.

The enzyme catalyses 7,8-dihydropteroate + L-glutamate + ATP = 7,8-dihydrofolate + ADP + phosphate + H(+). It carries out the reaction (6S)-5,6,7,8-tetrahydrofolyl-(gamma-L-Glu)(n) + L-glutamate + ATP = (6S)-5,6,7,8-tetrahydrofolyl-(gamma-L-Glu)(n+1) + ADP + phosphate + H(+). It functions in the pathway cofactor biosynthesis; tetrahydrofolate biosynthesis; 7,8-dihydrofolate from 2-amino-4-hydroxy-6-hydroxymethyl-7,8-dihydropteridine diphosphate and 4-aminobenzoate: step 2/2. The protein operates within cofactor biosynthesis; tetrahydrofolylpolyglutamate biosynthesis. Its function is as follows. Functions in two distinct reactions of the de novo folate biosynthetic pathway. Catalyzes the addition of a glutamate residue to dihydropteroate (7,8-dihydropteroate or H2Pte) to form dihydrofolate (7,8-dihydrofolate monoglutamate or H2Pte-Glu). Also catalyzes successive additions of L-glutamate to tetrahydrofolate, leading to folylpolyglutamate derivatives. In Bacillus subtilis (strain 168), this protein is Dihydrofolate synthase/folylpolyglutamate synthase (folC).